We begin with the raw amino-acid sequence, 210 residues long: Cytidylate kinase (210 aa).

7–15 provides a ligand contact to ATP; that stretch reads GPAASGKGT.

Belongs to the cytidylate kinase family. Type 1 subfamily.

Its subcellular location is the cytoplasm. The enzyme catalyses CMP + ATP = CDP + ADP. The catalysed reaction is dCMP + ATP = dCDP + ADP. This chain is Cytidylate kinase, found in Methylobacterium sp. (strain 4-46).